The primary structure comprises 219 residues: NAD(P)H-quinone oxidoreductase subunit I (219 aa).

4Fe-4S ferredoxin-type domains follow at residues 55–84 (GRIH…VDWV) and 95–124 (RNYS…MTEE). [4Fe-4S] cluster-binding residues include C64, C67, C70, C74, C104, C107, C110, and C114.

The protein belongs to the complex I 23 kDa subunit family. As to quaternary structure, NDH-1 is composed of at least 11 different subunits. [4Fe-4S] cluster is required as a cofactor.

It localises to the cellular thylakoid membrane. The enzyme catalyses a plastoquinone + NADH + (n+1) H(+)(in) = a plastoquinol + NAD(+) + n H(+)(out). It carries out the reaction a plastoquinone + NADPH + (n+1) H(+)(in) = a plastoquinol + NADP(+) + n H(+)(out). Its function is as follows. NDH-1 shuttles electrons from an unknown electron donor, via FMN and iron-sulfur (Fe-S) centers, to quinones in the respiratory and/or the photosynthetic chain. The immediate electron acceptor for the enzyme in this species is believed to be plastoquinone. Couples the redox reaction to proton translocation, and thus conserves the redox energy in a proton gradient. The sequence is that of NAD(P)H-quinone oxidoreductase subunit I from Prochlorococcus marinus (strain SARG / CCMP1375 / SS120).